Here is a 358-residue protein sequence, read N- to C-terminus: MESKAFNKPKVELHVHLDGSIKPETIIHFAKKRQIKLPADTVEGLLEHVSYKEPLSLTEFLQKFNHYMPAIAGDREAIKRIAYEFVEMKAKEGVIYVEVRYSPHFLANSKVDPIPWGQKEGDITPDEVVDLVNQGLRKGEKTFNIKARSILCCMRHMPNWSSEVIELCKKYQNDTVVAIDLAGDESLNCESYPGHRKAYEEAVKCGIHRTVHAGEVGPPSVVKEAVEVLKAERIGHGYHTTEDPNLYKELLENNMHFEVCPWSSYLTSACHPDFTKHPATQFRKDKANFSLNTDDPLIFGSTLDVDYSIAVQHMGFTEDEFKRVNINAAKSSFLPDNEKKELLYKLYEAYGMILSTGL.

Residues His-14 and His-16 each contribute to the Zn(2+) site. Substrate is bound by residues His-16, Asp-18, and Gly-183. His-212 contacts Zn(2+). Glu-215 functions as the Proton donor in the catalytic mechanism. Asp-294 is a Zn(2+) binding site. Asp-295 contacts substrate.

It belongs to the metallo-dependent hydrolases superfamily. Adenosine and AMP deaminases family. Requires Zn(2+) as cofactor.

Its subcellular location is the cell membrane. It localises to the cell junction. The protein resides in the cytoplasmic vesicle lumen. It is found in the cytoplasm. The protein localises to the lysosome. It catalyses the reaction adenosine + H2O + H(+) = inosine + NH4(+). The catalysed reaction is 2'-deoxyadenosine + H2O + H(+) = 2'-deoxyinosine + NH4(+). In terms of biological role, catalyzes the hydrolytic deamination of adenosine and 2-deoxyadenosine. Plays an important role in purine metabolism and in adenosine homeostasis. Modulates signaling by extracellular adenosine, and so contributes indirectly to cellular signaling events. May act as a positive regulator of T-cell coactivation. This Xenopus laevis (African clawed frog) protein is Adenosine deaminase (ada).